We begin with the raw amino-acid sequence, 427 residues long: Enolase (427 aa).

Residue Gln-163 coordinates (2R)-2-phosphoglycerate. Residue Glu-205 is the Proton donor of the active site. Positions 242, 285, and 312 each coordinate Mg(2+). (2R)-2-phosphoglycerate is bound by residues Lys-337, Arg-366, Ser-367, and Lys-388. The Proton acceptor role is filled by Lys-337.

Belongs to the enolase family. Mg(2+) is required as a cofactor.

It localises to the cytoplasm. The protein localises to the secreted. The protein resides in the cell surface. It catalyses the reaction (2R)-2-phosphoglycerate = phosphoenolpyruvate + H2O. It participates in carbohydrate degradation; glycolysis; pyruvate from D-glyceraldehyde 3-phosphate: step 4/5. Functionally, catalyzes the reversible conversion of 2-phosphoglycerate (2-PG) into phosphoenolpyruvate (PEP). It is essential for the degradation of carbohydrates via glycolysis. The sequence is that of Enolase from Thiobacillus denitrificans (strain ATCC 25259 / T1).